We begin with the raw amino-acid sequence, 53 residues long: Ferredoxin B (53 aa).

Positions Gly1–Thr35 are N-terminal extension. Lys29 bears the N6-methyllysine mark. The region spanning Gly34 to Ala53 is the 4Fe-4S ferredoxin-type 1 domain. [3Fe-4S] cluster contacts are provided by Cys44 and Cys50.

It depends on [3Fe-4S] cluster as a cofactor. The cofactor is [4Fe-4S] cluster.

In terms of biological role, ferredoxins are iron-sulfur proteins that transfer electrons in a wide variety of metabolic reactions. In Sulfuracidifex metallicus (Sulfolobus metallicus), this protein is Ferredoxin B.